The sequence spans 333 residues: Probable xyloglucan endotransglucosylase/hydrolase protein 27 (333 aa).

The signal sequence occupies residues 1–20 (METLSRLLVFMSLFSGLVSG). Residues 21-223 (FALQNLPITS…YKYAPYIARF (203 aa)) enclose the GH16 domain. Residue E108 is the Nucleophile of the active site. Catalysis depends on E112, which acts as the Proton donor. Xyloglucan is bound by residues E112 and 125 to 127 (QTN). N-linked (GlcNAc...) asparagine glycosylation is present at N131. Xyloglucan-binding positions include 135-139 (HSGRE), 202-203 (KW), G207, and R282. C277 and C290 are disulfide-bonded. Residues 311 to 333 (IPRRHRNGKHRSKRSRVDGTESI) form a disordered region. Residues 312–324 (PRRHRNGKHRSKR) are compositionally biased toward basic residues.

The protein belongs to the glycosyl hydrolase 16 family. XTH group 3 subfamily. Contains at least one intrachain disulfide bond essential for its enzymatic activity. As to expression, expressed in 7 day old seedlings, roots, hypocotyls, rosette leaves, internodes between nodes bearing axillary shoots, nodes bearing flowers, flower buds, anthers and siliques.

It localises to the secreted. Its subcellular location is the cell wall. The protein localises to the extracellular space. The protein resides in the apoplast. It catalyses the reaction breaks a beta-(1-&gt;4) bond in the backbone of a xyloglucan and transfers the xyloglucanyl segment on to O-4 of the non-reducing terminal glucose residue of an acceptor, which can be a xyloglucan or an oligosaccharide of xyloglucan.. In terms of biological role, catalyzes xyloglucan endohydrolysis (XEH) and/or endotransglycosylation (XET). Cleaves and religates xyloglucan polymers, an essential constituent of the primary cell wall, and thereby participates in cell wall construction of growing tissues. Required for cell wall modification during the development of tracheary elements. This is Probable xyloglucan endotransglucosylase/hydrolase protein 27 (XTH27) from Arabidopsis thaliana (Mouse-ear cress).